The sequence spans 159 residues: Keratin-associated protein 6-2 (159 aa).

The segment at 11–147 is 66 X 2 AA repeats of G-[YCGS]; the sequence is GYGCGYGSGY…SYYRSGCCGY (137 aa).

The protein belongs to the KRTAP type 6 family. As to quaternary structure, interacts with hair keratins. As to expression, expressed in skin during two hair growth cycles. Expression restricted to the cortical cells of hair follicles, appearing first in the cortical cells processing the flat nuclei located a few cells above the dermal papilla.

In the hair cortex, hair keratin intermediate filaments are embedded in an interfilamentous matrix, consisting of hair keratin-associated proteins (KRTAP), which are essential for the formation of a rigid and resistant hair shaft through their extensive disulfide bond cross-linking with abundant cysteine residues of hair keratins. The matrix proteins include the high-sulfur and high-glycine-tyrosine keratins. The protein is Keratin-associated protein 6-2 of Mus musculus (Mouse).